Consider the following 208-residue polypeptide: ATP-dependent Clp protease proteolytic subunit (208 aa).

Catalysis depends on S105, which acts as the Nucleophile. The active site involves H130.

It belongs to the peptidase S14 family. In terms of assembly, fourteen ClpP subunits assemble into 2 heptameric rings which stack back to back to give a disk-like structure with a central cavity, resembling the structure of eukaryotic proteasomes.

It localises to the cytoplasm. It carries out the reaction Hydrolysis of proteins to small peptides in the presence of ATP and magnesium. alpha-casein is the usual test substrate. In the absence of ATP, only oligopeptides shorter than five residues are hydrolyzed (such as succinyl-Leu-Tyr-|-NHMec, and Leu-Tyr-Leu-|-Tyr-Trp, in which cleavage of the -Tyr-|-Leu- and -Tyr-|-Trp bonds also occurs).. Functionally, cleaves peptides in various proteins in a process that requires ATP hydrolysis. Has a chymotrypsin-like activity. Plays a major role in the degradation of misfolded proteins. The sequence is that of ATP-dependent Clp protease proteolytic subunit from Xylella fastidiosa (strain M12).